Reading from the N-terminus, the 205-residue chain is Probable nicotinate-nucleotide adenylyltransferase (205 aa).

The protein belongs to the NadD family.

It carries out the reaction nicotinate beta-D-ribonucleotide + ATP + H(+) = deamido-NAD(+) + diphosphate. The protein operates within cofactor biosynthesis; NAD(+) biosynthesis; deamido-NAD(+) from nicotinate D-ribonucleotide: step 1/1. Catalyzes the reversible adenylation of nicotinate mononucleotide (NaMN) to nicotinic acid adenine dinucleotide (NaAD). This Nocardioides sp. (strain ATCC BAA-499 / JS614) protein is Probable nicotinate-nucleotide adenylyltransferase.